Here is an 86-residue protein sequence, read N- to C-terminus: Actinorhodin polyketide synthase acyl carrier protein (86 aa).

In terms of domain architecture, Carrier spans 4-82; the sequence is LLTTDDLRRA…ELLDLINGAL (79 aa). Serine 42 bears the O-(pantetheine 4'-phosphoryl)serine mark.

In terms of processing, 4'-phosphopantetheine is transferred from CoA to a specific serine of the apo-ACP-like protein.

It participates in antibiotic biosynthesis; actinorhodin biosynthesis. In terms of biological role, acyl carrier protein. The protein is Actinorhodin polyketide synthase acyl carrier protein of Streptomyces coelicolor (strain ATCC BAA-471 / A3(2) / M145).